Here is a 163-residue protein sequence, read N- to C-terminus: UPF0262 protein RPD_4278 (163 aa).

The protein belongs to the UPF0262 family.

This chain is UPF0262 protein RPD_4278, found in Rhodopseudomonas palustris (strain BisB5).